The following is a 239-amino-acid chain: Orotidine 5'-phosphate decarboxylase (239 aa).

Substrate-binding positions include D10, K33, 60–69 (DLKLYDIPNT), T124, R186, Q195, G215, and R216. Residue K62 is the Proton donor of the active site.

Belongs to the OMP decarboxylase family. Type 1 subfamily. Homodimer.

The catalysed reaction is orotidine 5'-phosphate + H(+) = UMP + CO2. It participates in pyrimidine metabolism; UMP biosynthesis via de novo pathway; UMP from orotate: step 2/2. Functionally, catalyzes the decarboxylation of orotidine 5'-monophosphate (OMP) to uridine 5'-monophosphate (UMP). The chain is Orotidine 5'-phosphate decarboxylase from Latilactobacillus sakei subsp. sakei (strain 23K) (Lactobacillus sakei subsp. sakei).